Reading from the N-terminus, the 517-residue chain is Acetyl-coenzyme A carboxylase carboxyl transferase subunit beta, chloroplastic (517 aa).

Composition is skewed to basic and acidic residues over residues 1–17 (MKPT…KSNE), 24–41 (GDNK…KSNE), 48–65 (GDNK…KSNE), and 72–81 (GDKQKDKKDG). 2 disordered regions span residues 1–179 (MKPT…KEEE) and 204–234 (KHRD…DSEA). Residues 87–131 (YDDEYEEDLEYDDEYEEDLEYDDEYEEDLEYDDEEYDDEYEEDLE) show a composition bias toward acidic residues. 2 stretches are compositionally biased toward basic and acidic residues: residues 132 to 179 (GDNK…KEEE) and 209 to 229 (KSVP…RDTD). The CoA carboxyltransferase N-terminal domain maps to 243 to 514 (LWVHCKLCSG…NSQVINIYNY (272 aa)). Residues Cys247, Cys250, Cys266, and Cys269 each contribute to the Zn(2+) site. A C4-type zinc finger spans residues 247–269 (CKLCSGFNYKKILKSKNNVCEQC).

Belongs to the AccD/PCCB family. As to quaternary structure, acetyl-CoA carboxylase is a heterohexamer composed of biotin carboxyl carrier protein, biotin carboxylase and 2 subunits each of ACCase subunit alpha and ACCase plastid-coded subunit beta (accD). Requires Zn(2+) as cofactor.

It localises to the plastid. The protein localises to the chloroplast stroma. It catalyses the reaction N(6)-carboxybiotinyl-L-lysyl-[protein] + acetyl-CoA = N(6)-biotinyl-L-lysyl-[protein] + malonyl-CoA. Its pathway is lipid metabolism; malonyl-CoA biosynthesis; malonyl-CoA from acetyl-CoA: step 1/1. Functionally, component of the acetyl coenzyme A carboxylase (ACC) complex. Biotin carboxylase (BC) catalyzes the carboxylation of biotin on its carrier protein (BCCP) and then the CO(2) group is transferred by the transcarboxylase to acetyl-CoA to form malonyl-CoA. This Oenothera elata subsp. hookeri (Hooker's evening primrose) protein is Acetyl-coenzyme A carboxylase carboxyl transferase subunit beta, chloroplastic.